The chain runs to 339 residues: UDP-N-acetylglucosamine/UDP-N-acetylgalactosamine transporter nstp-4 (339 aa).

The next 8 membrane-spanning stretches (helical) occupy residues 44-64 (LSST…FFVI), 94-114 (LKVA…FFAL), 148-168 (YNWM…YPSG), 186-206 (ILGL…GVYF), 224-244 (LAFF…WQAI), 255-275 (GVIW…ALVV), 281-301 (ILKG…SWLV), and 305-325 (LTIT…TFLY).

The protein belongs to the nucleotide-sugar transporter family. SLC35A subfamily. Widely expressed, including in pharynx and pharyngeal gland cells, seam cells, spermatheca, stomatointestinal muscle, vulva, and body wall muscle.

It localises to the golgi apparatus membrane. In terms of biological role, uridine diphosphate-N-acetylglucosamine (UDP-GlcNAc) transporter in the Golgi apparatus. UDP-N-acetylgalactosamine (UDP-GalNAc) transporter in the Golgi apparatus. Apparently transports UDP-GlcNAc and UDP-GalNAc simultaneously, and independently, by an unknown mechanism. Functions redundantly with nucleotide sugar transporter srf-3. May be involved in gonadal development. This Caenorhabditis elegans protein is UDP-N-acetylglucosamine/UDP-N-acetylgalactosamine transporter nstp-4.